The following is a 913-amino-acid chain: Protein translocase subunit SecA (913 aa).

Residues Gln87, 105 to 109 (GEGKT), and Asp512 each bind ATP. Residues Cys897, Cys899, Cys908, and His909 each coordinate Zn(2+).

It belongs to the SecA family. Monomer and homodimer. Part of the essential Sec protein translocation apparatus which comprises SecA, SecYEG and auxiliary proteins SecDF-YajC and YidC. It depends on Zn(2+) as a cofactor.

The protein resides in the cell inner membrane. It localises to the cytoplasm. It carries out the reaction ATP + H2O + cellular proteinSide 1 = ADP + phosphate + cellular proteinSide 2.. Part of the Sec protein translocase complex. Interacts with the SecYEG preprotein conducting channel. Has a central role in coupling the hydrolysis of ATP to the transfer of proteins into and across the cell membrane, serving both as a receptor for the preprotein-SecB complex and as an ATP-driven molecular motor driving the stepwise translocation of polypeptide chains across the membrane. The protein is Protein translocase subunit SecA of Pseudomonas syringae pv. syringae (strain B728a).